The chain runs to 378 residues: Erythronate-4-phosphate dehydrogenase (378 aa).

Residues Ser-45 and Thr-66 each coordinate substrate. 2 residues coordinate NAD(+): Asp-146 and Thr-175. The active site involves Arg-208. An NAD(+)-binding site is contributed by Asp-232. Glu-237 is an active-site residue. Catalysis depends on His-254, which acts as the Proton donor. Gly-257 contributes to the NAD(+) binding site. Tyr-258 is a binding site for substrate.

Belongs to the D-isomer specific 2-hydroxyacid dehydrogenase family. PdxB subfamily. Homodimer.

The protein resides in the cytoplasm. The catalysed reaction is 4-phospho-D-erythronate + NAD(+) = (R)-3-hydroxy-2-oxo-4-phosphooxybutanoate + NADH + H(+). It participates in cofactor biosynthesis; pyridoxine 5'-phosphate biosynthesis; pyridoxine 5'-phosphate from D-erythrose 4-phosphate: step 2/5. In terms of biological role, catalyzes the oxidation of erythronate-4-phosphate to 3-hydroxy-2-oxo-4-phosphonooxybutanoate. The chain is Erythronate-4-phosphate dehydrogenase from Cronobacter sakazakii (strain ATCC BAA-894) (Enterobacter sakazakii).